Consider the following 146-residue polypeptide: NADH-quinone oxidoreductase subunit A (146 aa).

Transmembrane regions (helical) follow at residues 16–36 (FAIF…GGWF), 68–88 (FYLV…LFAW), and 98–118 (VGFV…VYLV).

This sequence belongs to the complex I subunit 3 family. NDH-1 is composed of 13 different subunits. Subunits NuoA, H, J, K, L, M, N constitute the membrane sector of the complex.

It localises to the cell inner membrane. The catalysed reaction is a quinone + NADH + 5 H(+)(in) = a quinol + NAD(+) + 4 H(+)(out). In terms of biological role, NDH-1 shuttles electrons from NADH, via FMN and iron-sulfur (Fe-S) centers, to quinones in the respiratory chain. The immediate electron acceptor for the enzyme in this species is believed to be ubiquinone. Couples the redox reaction to proton translocation (for every two electrons transferred, four hydrogen ions are translocated across the cytoplasmic membrane), and thus conserves the redox energy in a proton gradient. The sequence is that of NADH-quinone oxidoreductase subunit A from Enterobacter sp. (strain 638).